The sequence spans 329 residues: 4-hydroxy-3-methylbut-2-enyl diphosphate reductase (329 aa).

Residue cysteine 27 participates in [4Fe-4S] cluster binding. Histidine 56 and histidine 89 together coordinate (2E)-4-hydroxy-3-methylbut-2-enyl diphosphate. Dimethylallyl diphosphate-binding residues include histidine 56 and histidine 89. Isopentenyl diphosphate-binding residues include histidine 56 and histidine 89. Residue cysteine 111 participates in [4Fe-4S] cluster binding. Residue histidine 139 participates in (2E)-4-hydroxy-3-methylbut-2-enyl diphosphate binding. Position 139 (histidine 139) interacts with dimethylallyl diphosphate. Residue histidine 139 coordinates isopentenyl diphosphate. Glutamate 141 acts as the Proton donor in catalysis. Threonine 179 serves as a coordination point for (2E)-4-hydroxy-3-methylbut-2-enyl diphosphate. Cysteine 209 provides a ligand contact to [4Fe-4S] cluster. (2E)-4-hydroxy-3-methylbut-2-enyl diphosphate contacts are provided by serine 237, serine 238, asparagine 239, and serine 281. Residues serine 237, serine 238, asparagine 239, and serine 281 each coordinate dimethylallyl diphosphate. Positions 237, 238, 239, and 281 each coordinate isopentenyl diphosphate.

Belongs to the IspH family. [4Fe-4S] cluster is required as a cofactor.

It carries out the reaction isopentenyl diphosphate + 2 oxidized [2Fe-2S]-[ferredoxin] + H2O = (2E)-4-hydroxy-3-methylbut-2-enyl diphosphate + 2 reduced [2Fe-2S]-[ferredoxin] + 2 H(+). The catalysed reaction is dimethylallyl diphosphate + 2 oxidized [2Fe-2S]-[ferredoxin] + H2O = (2E)-4-hydroxy-3-methylbut-2-enyl diphosphate + 2 reduced [2Fe-2S]-[ferredoxin] + 2 H(+). It participates in isoprenoid biosynthesis; dimethylallyl diphosphate biosynthesis; dimethylallyl diphosphate from (2E)-4-hydroxy-3-methylbutenyl diphosphate: step 1/1. It functions in the pathway isoprenoid biosynthesis; isopentenyl diphosphate biosynthesis via DXP pathway; isopentenyl diphosphate from 1-deoxy-D-xylulose 5-phosphate: step 6/6. In terms of biological role, catalyzes the conversion of 1-hydroxy-2-methyl-2-(E)-butenyl 4-diphosphate (HMBPP) into a mixture of isopentenyl diphosphate (IPP) and dimethylallyl diphosphate (DMAPP). Acts in the terminal step of the DOXP/MEP pathway for isoprenoid precursor biosynthesis. The chain is 4-hydroxy-3-methylbut-2-enyl diphosphate reductase from Methylibium petroleiphilum (strain ATCC BAA-1232 / LMG 22953 / PM1).